We begin with the raw amino-acid sequence, 420 residues long: Probable ABC transporter-binding protein DR_1438 (420 aa).

An N-terminal signal peptide occupies residues 1–24 (MKKFAAVLGLTVAFAAASQAHAVT).

Belongs to the bacterial solute-binding protein 1 family.

Probably part of a binding-protein-dependent transport system. The sequence is that of Probable ABC transporter-binding protein DR_1438 from Deinococcus radiodurans (strain ATCC 13939 / DSM 20539 / JCM 16871 / CCUG 27074 / LMG 4051 / NBRC 15346 / NCIMB 9279 / VKM B-1422 / R1).